The sequence spans 378 residues: MASETIVNLLDLDAEGLVAYCGGLGEKAFRAKQLQRWIHQYNAADFDGMTDLAKSLREKLKGRAVIGTPDILSDHVSADGTRKWLINVGNGNAVETVFIPEETRGTLCVSSQAGCAVNCRFCSTGKQGFSRNLSTGEIVGQLRMAEFALRASLGRAPGPNGKAERVITNVVMMGMGEPLLNYSAVVPAMRLMLDDNAYGLSRRRVTLSTSGVVPMMDRLGAELPVALAVSLHAPNDALRDELVPLNKKHPLRELMAACQRYLKVAPRDFITFEYCMLDGVNDTEAHARELLALTRDVPCKFNLIPFNPFPESGLLRSKTEQIKRFAQVLIDAGVVTTIRKTRGDDIDAACGQLAGAVKDRTRLAERTGATKIIEVRAV.

The active-site Proton acceptor is the Glu-95. A Radical SAM core domain is found at 101–345; sequence EETRGTLCVS…TTIRKTRGDD (245 aa). Cys-108 and Cys-350 form a disulfide bridge. Residues Cys-115, Cys-119, and Cys-122 each coordinate [4Fe-4S] cluster. Residues 176–177, Ser-208, 230–232, and Asn-307 contribute to the S-adenosyl-L-methionine site; these read GE and SLH. The active-site S-methylcysteine intermediate is Cys-350.

It belongs to the radical SAM superfamily. RlmN family. Requires [4Fe-4S] cluster as cofactor.

The protein resides in the cytoplasm. The enzyme catalyses adenosine(2503) in 23S rRNA + 2 reduced [2Fe-2S]-[ferredoxin] + 2 S-adenosyl-L-methionine = 2-methyladenosine(2503) in 23S rRNA + 5'-deoxyadenosine + L-methionine + 2 oxidized [2Fe-2S]-[ferredoxin] + S-adenosyl-L-homocysteine. It catalyses the reaction adenosine(37) in tRNA + 2 reduced [2Fe-2S]-[ferredoxin] + 2 S-adenosyl-L-methionine = 2-methyladenosine(37) in tRNA + 5'-deoxyadenosine + L-methionine + 2 oxidized [2Fe-2S]-[ferredoxin] + S-adenosyl-L-homocysteine. In terms of biological role, specifically methylates position 2 of adenine 2503 in 23S rRNA and position 2 of adenine 37 in tRNAs. m2A2503 modification seems to play a crucial role in the proofreading step occurring at the peptidyl transferase center and thus would serve to optimize ribosomal fidelity. The polypeptide is Dual-specificity RNA methyltransferase RlmN (Burkholderia thailandensis (strain ATCC 700388 / DSM 13276 / CCUG 48851 / CIP 106301 / E264)).